The chain runs to 215 residues: Peroxiredoxin (215 aa).

The Thioredoxin domain maps to 6–161; sequence PLIGEEFPRL…ILRAVRALQT (156 aa). Catalysis depends on Cys48, which acts as the Cysteine sulfenic acid (-SOH) intermediate. Arg124 is a binding site for substrate. An intrachain disulfide couples Cys205 to Cys211.

The protein belongs to the peroxiredoxin family. Prx6 subfamily. In terms of assembly, homodecamer. Pentamer of dimers that assemble into a ring structure.

Its subcellular location is the cytoplasm. The enzyme catalyses a hydroperoxide + [thioredoxin]-dithiol = an alcohol + [thioredoxin]-disulfide + H2O. Thiol-specific peroxidase that catalyzes the reduction of hydrogen peroxide and organic hydroperoxides to water and alcohols, respectively. Plays a role in cell protection against oxidative stress by detoxifying peroxides. The sequence is that of Peroxiredoxin from Thermotoga petrophila (strain ATCC BAA-488 / DSM 13995 / JCM 10881 / RKU-1).